A 549-amino-acid polypeptide reads, in one-letter code: Cytochrome bc1 complex cytochrome b subunit (549 aa).

A helical membrane pass occupies residues 54 to 74 (VCLYSFIIIILTGVYLTLFFH). The heme site is built by H118 and H132. 3 consecutive transmembrane segments (helical) span residues 122–142 (ALIFLAGMFVHMMRVFFTGAF), 150–170 (WLFGFLLLVLGMFTGFTGYSL), and 182–202 (FMEGAILSVPIVGTYISFFLF). Heme-binding residues include H219 and H234. Transmembrane regions (helical) follow at residues 220–240 (ILLLPGIMLGLLVGHLILVFY), 269–289 (AGGFFFLVFGVISVVSAIATI), 334–354 (LVLGVFVPLLIFPLVLAAIAV), 389–409 (FGVAWLTVYFVLLIGGGNDLW), and 417–437 (INAITWFVRIAFFVGPVVAFI).

It belongs to the cytochrome b family. The cytochrome bc1 complex is composed of a cytochrome b (QcrB), the Rieske iron-sulfur protein (QcrA) and a diheme cytochrome c (QcrC) subunit. Heme serves as cofactor.

It localises to the cell membrane. It catalyses the reaction a quinol + 2 Fe(III)-[cytochrome c](out) = a quinone + 2 Fe(II)-[cytochrome c](out) + 2 H(+)(out). Functionally, cytochrome b subunit of the cytochrome bc1 complex, an essential component of the respiratory electron transport chain required for ATP synthesis. The bc1 complex catalyzes the oxidation of ubiquinol and the reduction of cytochrome c in the respiratory chain. The bc1 complex operates through a Q-cycle mechanism that couples electron transfer to generation of the proton gradient that drives ATP synthesis. The cytochrome b subunit contains two ubiquinol reactive sites: the oxidation (QP) site and the reduction (QN) site. In Streptomyces lividans, this protein is Cytochrome bc1 complex cytochrome b subunit (qcrB).